We begin with the raw amino-acid sequence, 1022 residues long: Protein trachealess (1022 aa).

Residues 86 to 139 (LRKEKSRDAARSRRGKENYEFYELAKMLPLPAAITSQLDKASIIRLTISYLKLR) enclose the bHLH domain. In terms of domain architecture, PAS 1 spans 174–244 (EQHQGTHILQ…DQLGLSLTSG (71 aa)). The interval 239–289 (LSLTSGGGGGGGSSSSGGGGGGAGGGMASPTSGASDDGSGTHGTNNPDVAA) is disordered. Positions 243–265 (SGGGGGGGSSSSGGGGGGAGGGM) are enriched in gly residues. Residues 280-289 (HGTNNPDVAA) are compositionally biased toward polar residues. The 71-residue stretch at 391 to 461 (PPPSVHEIRL…KSHSDLIEKG (71 aa)) folds into the PAS 2 domain. The PAC domain maps to 465-508 (TGYYRLMNKSGGYTWLQTCATVVCSTKNADEQNIICVNYVISNR). Disordered regions lie at residues 525-686 (DSIK…ADSA), 849-896 (AMTP…GDVV), and 962-996 (DDQG…ASQA). 2 stretches are compositionally biased toward low complexity: residues 578–587 (RSAAASHGSS) and 611–625 (PTTV…TPPV). The Nuclear localization signal motif lies at 629 to 636 (KRKRKTKA). Position 673 is a phosphoserine; by PKB/Akt1 (serine 673). Residues 851-864 (TPPSSVSPRDSNQP) are compositionally biased toward polar residues. The span at 987–996 (GSAGSSASQA) shows a compositional bias: low complexity.

Efficient DNA binding requires dimerization with another bHLH protein. Heterodimer with tgo. In terms of processing, ser-673 phosphorylation by PKB/Akt1 is required for nuclear targeting and transcriptional activity. In terms of tissue distribution, trachea, salivary gland ducts, posterior spiracles (Filzkoeper primordia) and a subset of cells in the CNS.

The protein localises to the nucleus. Transcription factor, master regulator of tracheal cell fates in the embryo, necessary for the development of the salivary gland duct, Malpighian tubules and the posterior spiracles. It may induce a general fate of branched tubular structures of epithelial origin. Functions with tgo to regulate expression of btl. The sequence is that of Protein trachealess (trh) from Drosophila melanogaster (Fruit fly).